The primary structure comprises 100 residues: Urease subunit gamma (100 aa).

This sequence belongs to the urease gamma subunit family. As to quaternary structure, heterotrimer of UreA (gamma), UreB (beta) and UreC (alpha) subunits. Three heterotrimers associate to form the active enzyme.

It is found in the cytoplasm. The enzyme catalyses urea + 2 H2O + H(+) = hydrogencarbonate + 2 NH4(+). Its pathway is nitrogen metabolism; urea degradation; CO(2) and NH(3) from urea (urease route): step 1/1. This Proteus hauseri protein is Urease subunit gamma.